The primary structure comprises 353 residues: Farnesyl pyrophosphate synthase (353 aa).

The isopentenyl diphosphate site is built by Lys-57, Arg-60, and Gln-96. Lys-57 carries the post-translational modification N6-(2-hydroxyisobutyryl)lysine; alternate. Lys-57 is subject to N6-acetyllysine; alternate. Residues Asp-103 and Asp-107 each contribute to the Mg(2+) site. Arg-112 is a dimethylallyl diphosphate binding site. Position 113 (Arg-113) interacts with isopentenyl diphosphate. The dimethylallyl diphosphate site is built by Lys-200, Thr-201, Gln-240, Lys-257, and Lys-266.

It belongs to the FPP/GGPP synthase family. Homodimer. Interacts with RSAD2. Interacts with bovine leukemia virus (BLV) protein G4. Mg(2+) serves as cofactor.

The protein resides in the cytoplasm. It carries out the reaction isopentenyl diphosphate + dimethylallyl diphosphate = (2E)-geranyl diphosphate + diphosphate. The catalysed reaction is isopentenyl diphosphate + (2E)-geranyl diphosphate = (2E,6E)-farnesyl diphosphate + diphosphate. It functions in the pathway isoprenoid biosynthesis; farnesyl diphosphate biosynthesis; farnesyl diphosphate from geranyl diphosphate and isopentenyl diphosphate: step 1/1. The protein operates within isoprenoid biosynthesis; geranyl diphosphate biosynthesis; geranyl diphosphate from dimethylallyl diphosphate and isopentenyl diphosphate: step 1/1. Its activity is regulated as follows. Inactivated by interferon-induced RSAD2. This inactivation may result of disruption of lipid rafts at the plasma membrane, and thus have an antiviral effect since many enveloped viruses need lipid rafts to bud efficiently out of the cell. Key enzyme in isoprenoid biosynthesis which catalyzes the formation of farnesyl diphosphate (FPP), a precursor for several classes of essential metabolites including sterols, dolichols, carotenoids, and ubiquinones. FPP also serves as substrate for protein farnesylation and geranylgeranylation. Catalyzes the sequential condensation of isopentenyl pyrophosphate with the allylic pyrophosphates, dimethylallyl pyrophosphate, and then with the resultant geranylpyrophosphate to the ultimate product farnesyl pyrophosphate. In Bos taurus (Bovine), this protein is Farnesyl pyrophosphate synthase (FDPS).